The following is a 367-amino-acid chain: Methylated-thiol--coenzyme M methyltransferase (367 aa).

Positions 236, 238, and 313 each coordinate Zn(2+).

The protein belongs to the uroporphyrinogen decarboxylase family. In terms of assembly, homodimer. The cofactor is Zn(2+).

The catalysed reaction is methanethiol + coenzyme M = methyl-coenzyme M + hydrogen sulfide + H(+). Methyltransferase involved in methanogenesis from methylated-thiols. Catalyzes two successive steps: mediates the transfer of a methyl group from the substrate to the cobalt cofactor of a methylated-thiol-specific corrinoid protein (MtsB), and the subsequent transfer of the methyl group from the corrinoid protein to coenzyme M. In Methanosarcina mazei (strain ATCC BAA-159 / DSM 3647 / Goe1 / Go1 / JCM 11833 / OCM 88) (Methanosarcina frisia), this protein is Methylated-thiol--coenzyme M methyltransferase (mtsA).